Here is a 414-residue protein sequence, read N- to C-terminus: Esterase FrsA (414 aa).

This sequence belongs to the FrsA family.

It catalyses the reaction a carboxylic ester + H2O = an alcohol + a carboxylate + H(+). Functionally, catalyzes the hydrolysis of esters. This Escherichia coli O8 (strain IAI1) protein is Esterase FrsA.